We begin with the raw amino-acid sequence, 554 residues long: MGSVAAEEVVVFRSKLPDIEIDNSMTLQEYCFARMAEVGARPCLIDGQTGESYTYAEVESASRRAAAGLRRMGVGKGDVVMSLLRNCPEFAFSFLGAARLGAATTTANPFYTPHEVHRQAEAAGARVIVTEACAVEKVREFAAERGVPVVTVDGAFDGCVEFREVLAAEELDADADVHPDDVVALPYSSGTTGLPKGVMLTHRSLITSVAQQVDGENPNLYFSKDDVILCLLPLFHIYSLNSVLLAGLRAGSTIVIMRKFDLGALVDLVRKHNITIAPFVPPIVVEIAKSPRVTAEDLASIRMVMSGAAPMGKDLQDAFMAKIPNAVLGQGYGMTEAGPVLAMCLAFAKEPFKVKSGSCGTVVRNAELKIVDPDTGTSLGRNQSGEICIRGEQIMKGYLNDPEATKNTIDEDGWLHTGDIGFVDDDDEIFIVDRLKEIIKYKGFQVPPAELEALLITHPEIKDAAVVSMKDDLAGEVPVAFIVRTEGSEITEDEIKKFVAKEVVFYKRINKVFFTDSIPKNPSGKILRKDLRARLAAGIPDAVAAAAADAPKSS.

6 residues coordinate ATP: Ser188, Ser189, Gly190, Thr191, Thr192, and Lys196. Residues Tyr238 and Ser242 each coordinate (E)-4-coumaroyl-AMP. Lys259 contacts CoA. Residues 261-330 (DLGALVDLVR…AKIPNAVLGQ (70 aa)) form an SBD1 region. Residues Ala308, Gln330, Gly331, Thr335, and Met343 each coordinate (E)-4-coumaroyl-AMP. Residues Gln330, Gly331, and Thr335 each contribute to the ATP site. The segment at 331-398 (GYGMTEAGPV…IRGEQIMKGY (68 aa)) is SBD2. Residues Asp419 and Arg434 each coordinate ATP. Positions 436 and 440 each coordinate (E)-4-coumaroyl-AMP. Positions 442 and 443 each coordinate CoA. Residue Lys525 participates in ATP binding.

It belongs to the ATP-dependent AMP-binding enzyme family. Requires Mg(2+) as cofactor. As to expression, expressed in root exodermis and epidermis cells, stem vascular cells, leaf developing vascular bundle cells and parenchyma cells, lemma, palea, stamens and pistil.

The catalysed reaction is (E)-ferulate + ATP + CoA = (E)-feruloyl-CoA + AMP + diphosphate. It carries out the reaction (E)-4-coumarate + ATP + CoA = (E)-4-coumaroyl-CoA + AMP + diphosphate. The enzyme catalyses (E)-caffeate + ATP + CoA = (E)-caffeoyl-CoA + AMP + diphosphate. It catalyses the reaction (E)-cinnamate + ATP + CoA = (E)-cinnamoyl-CoA + AMP + diphosphate. The catalysed reaction is (E)-ferulate + ATP + H(+) = (E)-feruloyl-AMP + diphosphate. It carries out the reaction (E)-feruloyl-AMP + CoA = (E)-feruloyl-CoA + AMP + H(+). The enzyme catalyses (E)-4-coumarate + ATP + H(+) = (E)-4-coumaroyl-AMP + diphosphate. It catalyses the reaction (E)-4-coumaroyl-AMP + CoA = (E)-4-coumaroyl-CoA + AMP + H(+). The catalysed reaction is (E)-caffeate + ATP + H(+) = (E)-caffeoyl-AMP + diphosphate. It carries out the reaction (E)-caffeoyl-AMP + CoA = (E)-caffeoyl-CoA + AMP + H(+). The protein operates within phytoalexin biosynthesis; 3,4',5-trihydroxystilbene biosynthesis; 3,4',5-trihydroxystilbene from trans-4-coumarate: step 1/2. Functionally, involved in the phenylpropanoid metabolism by mediating the activation of a number of hydroxycinnamates for the biosynthesis of monolignols and other phenolic secondary metabolites. Catalyzes the formation of CoA esters of cinnamate, 4-coumarate, caffeate and ferulate. Is more efficient with substrates in the following order: ferulate &gt; 4-coumarate &gt; caffeate &gt; cinnamate. Possesses very high activity compared to 4CL1, 4CL2, 4CL4 and 4CL5. Cannot convert sinapate to its corresponding CoA ester. May play a role in the synthesis of lignin as well as other phenolic compounds. Follows a two-step reaction mechanism, wherein the carboxylate substrate first undergoes adenylation by ATP, followed by a thioesterification in the presence of CoA to yield the final CoA thioester. The chain is 4-coumarate--CoA ligase 3 from Oryza sativa subsp. japonica (Rice).